The primary structure comprises 431 residues: 2-oxoisovalerate dehydrogenase subunit alpha, mitochondrial (431 aa).

140–142 serves as a coordination point for thiamine diphosphate; the sequence is QYR. Ser-189, Thr-194, and Gln-195 together coordinate K(+).

The protein belongs to the BCKDHA family. It depends on thiamine diphosphate as a cofactor.

It localises to the mitochondrion matrix. The catalysed reaction is N(6)-[(R)-lipoyl]-L-lysyl-[protein] + 3-methyl-2-oxobutanoate + H(+) = N(6)-[(R)-S(8)-2-methylpropanoyldihydrolipoyl]-L-lysyl-[protein] + CO2. Its pathway is lipid metabolism; fatty acid biosynthesis. Its function is as follows. The branched-chain alpha-keto dehydrogenase complex catalyzes the overall conversion of alpha-keto acids to acyl-CoA and CO(2). It contains multiple copies of three enzymatic components: branched-chain alpha-keto acid decarboxylase (E1), lipoamide acyltransferase (E2) and lipoamide dehydrogenase (E3). Required for the production of the monomethyl branched-chain fatty acids (mmBCFAs) isopentadecanoate (C15iso) and isoheptadecanoate (C17iso). The polypeptide is 2-oxoisovalerate dehydrogenase subunit alpha, mitochondrial (Caenorhabditis elegans).